The chain runs to 250 residues: Flavin-dependent thymidylate synthase (250 aa).

The region spanning 7 to 233 is the ThyX domain; it reads LSVELIACSS…PTVFGDFEIE (227 aa). DUMP is bound by residues 92–95, 103–107, and Arg-172; these read ELVR and QLSQR. Residues 95-97 and Gln-103 contribute to the FAD site; that span reads RHR. A ThyX motif motif is present at residues 95-105; that stretch reads RHRHFSFSQLS. FAD-binding positions include 188 to 190 and His-194; that span reads NFR. Residue Arg-199 coordinates dUMP. The active-site Involved in ionization of N3 of dUMP, leading to its activation is the Arg-199.

This sequence belongs to the thymidylate synthase ThyX family. As to quaternary structure, homotetramer. FAD serves as cofactor.

It carries out the reaction dUMP + (6R)-5,10-methylene-5,6,7,8-tetrahydrofolate + NADPH + H(+) = dTMP + (6S)-5,6,7,8-tetrahydrofolate + NADP(+). It participates in pyrimidine metabolism; dTTP biosynthesis. Functionally, catalyzes the reductive methylation of 2'-deoxyuridine-5'-monophosphate (dUMP) to 2'-deoxythymidine-5'-monophosphate (dTMP) while utilizing 5,10-methylenetetrahydrofolate (mTHF) as the methyl donor, and NADPH and FADH(2) as the reductant. In Corynebacterium glutamicum (strain ATCC 13032 / DSM 20300 / JCM 1318 / BCRC 11384 / CCUG 27702 / LMG 3730 / NBRC 12168 / NCIMB 10025 / NRRL B-2784 / 534), this protein is Flavin-dependent thymidylate synthase.